A 163-amino-acid polypeptide reads, in one-letter code: S-fimbrial adhesin protein SfaS (163 aa).

The first 22 residues, 1 to 22 (MKLKAIILATGLINCIAFSAQA), serve as a signal peptide directing secretion. C38 and C75 form a disulfide bridge. The segment at 138–144 (KARAVSK) is involved in sialic acid binding.

Belongs to the fimbrial protein family.

The protein localises to the fimbrium. Fimbriae (also called pili), polar filaments radiating from the surface of the bacterium to a length of 0.5-1.5 micrometers and numbering 100-300 per cell, enable bacteria to colonize the epithelium of specific host organs. Functionally, a minor fimbrial subunit, this protein is necessary for full expression of S-specific binding. S-fimbrial adhesins enable pathogenic E.coli causing urinary-tract infections or newborn meningitis to attach to glycoproteins terminating with alpha-sialic acid-(2-3)-beta-Gal. This protein binds to the alpha-sialic acid-(2-3)-beta-Gal and is thus responsible for erythrocyte recognition and hemagglutination. The chain is S-fimbrial adhesin protein SfaS (sfaS) from Escherichia coli O6:K15:H31 (strain 536 / UPEC).